A 236-amino-acid chain; its full sequence is Orotidine 5'-phosphate decarboxylase (236 aa).

Substrate is bound by residues Asp17, Lys39, 66-75 (DLKFHDIPNT), Thr125, Arg186, Gln195, Gly215, and Arg216. Catalysis depends on Lys68, which acts as the Proton donor.

The protein belongs to the OMP decarboxylase family. Type 1 subfamily. Homodimer.

It carries out the reaction orotidine 5'-phosphate + H(+) = UMP + CO2. The protein operates within pyrimidine metabolism; UMP biosynthesis via de novo pathway; UMP from orotate: step 2/2. Catalyzes the decarboxylation of orotidine 5'-monophosphate (OMP) to uridine 5'-monophosphate (UMP). The protein is Orotidine 5'-phosphate decarboxylase of Buchnera aphidicola subsp. Acyrthosiphon pisum (strain APS) (Acyrthosiphon pisum symbiotic bacterium).